Here is a 196-residue protein sequence, read N- to C-terminus: Glycerol-3-phosphate acyltransferase (196 aa).

5 helical membrane passes run 1-21, 53-73, 78-98, 112-132, and 152-172; these read MIIL…GYLT, AITA…GSLL, GALV…FLKF, IMTS…VMLI, and LLFG…VMIF.

Belongs to the PlsY family. Probably interacts with PlsX.

Its subcellular location is the cell membrane. The enzyme catalyses an acyl phosphate + sn-glycerol 3-phosphate = a 1-acyl-sn-glycero-3-phosphate + phosphate. Its pathway is lipid metabolism; phospholipid metabolism. Its function is as follows. Catalyzes the transfer of an acyl group from acyl-phosphate (acyl-PO(4)) to glycerol-3-phosphate (G3P) to form lysophosphatidic acid (LPA). This enzyme utilizes acyl-phosphate as fatty acyl donor, but not acyl-CoA or acyl-ACP. In Carboxydothermus hydrogenoformans (strain ATCC BAA-161 / DSM 6008 / Z-2901), this protein is Glycerol-3-phosphate acyltransferase.